We begin with the raw amino-acid sequence, 207 residues long: Large ribosomal subunit protein uL4 (207 aa).

The interval 49–78 (HAVKNRSAVSGGGRKPWRQKGTGRARQGSI) is disordered.

The protein belongs to the universal ribosomal protein uL4 family. As to quaternary structure, part of the 50S ribosomal subunit.

In terms of biological role, one of the primary rRNA binding proteins, this protein initially binds near the 5'-end of the 23S rRNA. It is important during the early stages of 50S assembly. It makes multiple contacts with different domains of the 23S rRNA in the assembled 50S subunit and ribosome. Functionally, forms part of the polypeptide exit tunnel. The chain is Large ribosomal subunit protein uL4 from Streptococcus equi subsp. zooepidemicus (strain H70).